We begin with the raw amino-acid sequence, 87 residues long: Toxin Css39.8 (87 aa).

An N-terminal signal peptide occupies residues 1–19 (MNSLLMITACFFLIGTVWA). An LCN-type CS-alpha/beta domain is found at 20 to 85 (KEGYLVNKST…TYPLPNKSCS (66 aa)). 4 disulfides stabilise this stretch: Cys-31–Cys-84, Cys-35–Cys-60, Cys-44–Cys-65, and Cys-48–Cys-67.

It belongs to the long (4 C-C) scorpion toxin superfamily. Sodium channel inhibitor family. Beta subfamily. As to expression, expressed by the venom gland.

Its subcellular location is the secreted. Functionally, beta toxins bind voltage-independently at site-4 of sodium channels (Nav) and shift the voltage of activation toward more negative potentials thereby affecting sodium channel activation and promoting spontaneous and repetitive firing. This toxin is lethal to crustaceans (freshwater crayfish (Cambarellus montezumae spp.)), it provokes a reversible paralysis to insects (crickets (Achaeta spp.)), but is not toxic to mice. At high concentrations, it does displace the (beta) mammal-specific toxin Cn2 from rat brain synaptosomes. The sequence is that of Toxin Css39.8 from Centruroides suffusus (Durango bark scorpion).